A 400-amino-acid polypeptide reads, in one-letter code: Diphosphomevalonate decarboxylase (400 aa).

Residues 25-28, R80, 155-160, and T211 each bind (R)-5-diphosphomevalonate; these read YWGK and SGSACR.

The protein belongs to the diphosphomevalonate decarboxylase family. Homodimer.

It localises to the cytoplasm. It carries out the reaction (R)-5-diphosphomevalonate + ATP = isopentenyl diphosphate + ADP + phosphate + CO2. It functions in the pathway steroid biosynthesis; cholesterol biosynthesis. In terms of biological role, catalyzes the ATP dependent decarboxylation of (R)-5-diphosphomevalonate to form isopentenyl diphosphate (IPP). Functions in the mevalonate (MVA) pathway leading to isopentenyl diphosphate (IPP), a key precursor for the biosynthesis of isoprenoids and sterol synthesis. The polypeptide is Diphosphomevalonate decarboxylase (mvd) (Danio rerio (Zebrafish)).